A 107-amino-acid polypeptide reads, in one-letter code: Serine-rich and transmembrane domain-containing protein 1 (107 aa).

A helical transmembrane segment spans residues 43-63; it reads IYVSIFLSLLAFLLLLLIIAL.

The protein localises to the membrane. The chain is Serine-rich and transmembrane domain-containing protein 1 (SERTM1) from Homo sapiens (Human).